The primary structure comprises 178 residues: Aspartic proteinase nepenthesin-2 (178 aa).

Residue Asp98 is part of the active site.

It belongs to the peptidase A1 family.

It is found in the secreted. It carries out the reaction Similar to pepsin, but also cleaves on either side of Asp and at Lys-|-Arg.. Its activity is regulated as follows. Inhibited by pepstatin and by diazoacetyl-D,L-norleucine methyl ester (DAN) in the presence of Cu(2+) ions. Extracellular proteinase found in the pitcher fluid of carnivorous plants. Digest prey for nitrogen uptake. The sequence is that of Aspartic proteinase nepenthesin-2 from Nepenthes distillatoria (Pitcher plant).